The chain runs to 369 residues: Flagellar P-ring protein (369 aa).

Positions 1–24 (MKTLHRCIGVALLALGALAGTAHA) are cleaved as a signal peptide.

It belongs to the FlgI family. The basal body constitutes a major portion of the flagellar organelle and consists of four rings (L,P,S, and M) mounted on a central rod.

It is found in the periplasm. The protein resides in the bacterial flagellum basal body. Assembles around the rod to form the L-ring and probably protects the motor/basal body from shearing forces during rotation. The protein is Flagellar P-ring protein of Ralstonia nicotianae (strain ATCC BAA-1114 / GMI1000) (Ralstonia solanacearum).